The primary structure comprises 69 residues: Putative membrane protein insertion efficiency factor (69 aa).

The protein belongs to the UPF0161 family.

Its subcellular location is the cell membrane. Its function is as follows. Could be involved in insertion of integral membrane proteins into the membrane. The protein is Putative membrane protein insertion efficiency factor of Clostridium kluyveri (strain NBRC 12016).